Reading from the N-terminus, the 400-residue chain is Enoyl-[acyl-carrier-protein] reductase [NADH] (400 aa).

Residues 48–53 (GSSSGY), 74–75 (FE), 111–112 (DA), and 139–140 (LA) contribute to the NAD(+) site. Tyr-225 provides a ligand contact to substrate. The active-site Proton donor is the Tyr-235. NAD(+)-binding positions include Lys-244 and 273 to 275 (VVT).

The protein belongs to the TER reductase family. As to quaternary structure, monomer.

It carries out the reaction a 2,3-saturated acyl-[ACP] + NAD(+) = a (2E)-enoyl-[ACP] + NADH + H(+). Its pathway is lipid metabolism; fatty acid biosynthesis. In terms of biological role, involved in the final reduction of the elongation cycle of fatty acid synthesis (FAS II). Catalyzes the reduction of a carbon-carbon double bond in an enoyl moiety that is covalently linked to an acyl carrier protein (ACP). In Shewanella oneidensis (strain ATCC 700550 / JCM 31522 / CIP 106686 / LMG 19005 / NCIMB 14063 / MR-1), this protein is Enoyl-[acyl-carrier-protein] reductase [NADH].